A 237-amino-acid chain; its full sequence is tRNA (guanine-N(7)-)-methyltransferase (237 aa).

Residues Glu-68, Glu-93, Asp-120, and Asp-143 each coordinate S-adenosyl-L-methionine. Residue Asp-143 is part of the active site. Residues Lys-147, Asp-179, and 216 to 219 each bind substrate; that span reads TKFE.

It belongs to the class I-like SAM-binding methyltransferase superfamily. TrmB family.

The catalysed reaction is guanosine(46) in tRNA + S-adenosyl-L-methionine = N(7)-methylguanosine(46) in tRNA + S-adenosyl-L-homocysteine. The protein operates within tRNA modification; N(7)-methylguanine-tRNA biosynthesis. Its function is as follows. Catalyzes the formation of N(7)-methylguanine at position 46 (m7G46) in tRNA. This is tRNA (guanine-N(7)-)-methyltransferase from Shewanella halifaxensis (strain HAW-EB4).